The following is a 205-amino-acid chain: GTP cyclohydrolase-2 (205 aa).

49-53 (RLHSE) lines the GTP pocket. Zn(2+)-binding residues include Cys-54, Cys-65, and Cys-67. GTP contacts are provided by residues Gln-70, 92 to 94 (EGR), and Thr-114. Asp-126 acts as the Proton acceptor in catalysis. The active-site Nucleophile is Arg-128. Residues Thr-149 and Lys-154 each coordinate GTP.

It belongs to the GTP cyclohydrolase II family. Zn(2+) serves as cofactor.

The catalysed reaction is GTP + 4 H2O = 2,5-diamino-6-hydroxy-4-(5-phosphoribosylamino)-pyrimidine + formate + 2 phosphate + 3 H(+). It functions in the pathway cofactor biosynthesis; riboflavin biosynthesis; 5-amino-6-(D-ribitylamino)uracil from GTP: step 1/4. Catalyzes the conversion of GTP to 2,5-diamino-6-ribosylamino-4(3H)-pyrimidinone 5'-phosphate (DARP), formate and pyrophosphate. This chain is GTP cyclohydrolase-2, found in Pseudomonas aeruginosa (strain UCBPP-PA14).